The sequence spans 139 residues: U6 snRNA-associated Sm-like protein LSm4 (139 aa).

Residue methionine 1 is modified to N-acetylmethionine. A Sm domain is found at 2–75; that stretch reads LPLSLLKTAQ…IKYLRIPDEI (74 aa). Residue lysine 80 forms a Glycyl lysine isopeptide (Lys-Gly) (interchain with G-Cter in SUMO2) linkage. The tract at residues 87–139 is disordered; that stretch reads GRGRGGLQQQKQQKGRGMGGAGRGVFGGRGRGGIPGTGRGQPEKKPGRQAGKQ. Residues 102-125 are compositionally biased toward gly residues; that stretch reads RGMGGAGRGVFGGRGRGGIPGTGR.

The protein belongs to the snRNP Sm proteins family. Component of the precatalytic spliceosome (spliceosome B complex). Component of the U4/U6-U5 tri-snRNP complex, a building block of the precatalytic spliceosome (spliceosome B complex). The U4/U6-U5 tri-snRNP complex is composed of the U4, U6 and U5 snRNAs and at least PRPF3, PRPF4, PRPF6, PRPF8, PRPF31, SNRNP200, TXNL4A, SNRNP40, SNRPB, SNRPD1, SNRPD2, SNRPD3, SNRPE, SNRPF, SNRPG, DDX23, CD2BP2, PPIH, SNU13, EFTUD2, SART1 and USP39, plus LSM2, LSM3, LSM4, LSM5, LSM6, LSM7 and LSM8. LSM2, LSM3, LSM4, LSM5, LSM6, LSM7 and LSM8 form a heptameric, ring-shaped subcomplex (the LSM2-8 complex) that is part of the U4/U6-U5 tri-snRNP complex and the precatalytic spliceosome.

It is found in the nucleus. Functionally, plays a role in pre-mRNA splicing as component of the U4/U6-U5 tri-snRNP complex that is involved in spliceosome assembly, and as component of the precatalytic spliceosome (spliceosome B complex). The heptameric LSM2-8 complex binds specifically to the 3'-terminal U-tract of U6 snRNA. This Bos taurus (Bovine) protein is U6 snRNA-associated Sm-like protein LSm4 (LSM4).